Here is a 481-residue protein sequence, read N- to C-terminus: Glutamyl-tRNA(Gln) amidotransferase subunit A (481 aa).

Catalysis depends on charge relay system residues K74 and S149. S173 (acyl-ester intermediate) is an active-site residue.

It belongs to the amidase family. GatA subfamily. Heterotrimer of A, B and C subunits.

The enzyme catalyses L-glutamyl-tRNA(Gln) + L-glutamine + ATP + H2O = L-glutaminyl-tRNA(Gln) + L-glutamate + ADP + phosphate + H(+). Allows the formation of correctly charged Gln-tRNA(Gln) through the transamidation of misacylated Glu-tRNA(Gln) in organisms which lack glutaminyl-tRNA synthetase. The reaction takes place in the presence of glutamine and ATP through an activated gamma-phospho-Glu-tRNA(Gln). The polypeptide is Glutamyl-tRNA(Gln) amidotransferase subunit A (Francisella tularensis subsp. tularensis (strain WY96-3418)).